Reading from the N-terminus, the 266-residue chain is UPF0294 protein Ent638_0743 (266 aa).

The protein belongs to the UPF0294 family.

It is found in the cytoplasm. This chain is UPF0294 protein Ent638_0743, found in Enterobacter sp. (strain 638).